A 263-amino-acid chain; its full sequence is Aminoglycoside (3'') (9) adenylyltransferase (263 aa).

It catalyses the reaction streptomycin + ATP = 3''-O-adenylylstreptomycin + diphosphate. It carries out the reaction spectinomycin + ATP = 9-O-adenylylspectinomycin + diphosphate. In terms of biological role, mediates bacterial resistance to the antibiotics streptomycin and spectinomycin. This is Aminoglycoside (3'') (9) adenylyltransferase from Escherichia coli.